The primary structure comprises 122 residues: uncharacterized protein (122 aa).

The next 4 membrane-spanning stretches (helical) occupy residues 7 to 27 (IVAI…IFCD), 29 to 49 (LVLA…LGWI), 62 to 82 (AITG…SKNP), and 89 to 109 (KEIF…YFGY).

It is found in the cell membrane. This is an uncharacterized protein from Methanocaldococcus jannaschii (strain ATCC 43067 / DSM 2661 / JAL-1 / JCM 10045 / NBRC 100440) (Methanococcus jannaschii).